Consider the following 1417-residue polypeptide: DExH-box ATP-dependent RNA helicase DExH4, chloroplastic (1417 aa).

The segment covering 1 to 12 (MAPTKKPQKNKQ) has biased composition (basic residues). Positions 1–37 (MAPTKKPQKNKQSKNEIASSLIPNSGHKKPSKAPKLL) are disordered. The N-terminal 61 residues, 1 to 61 (MAPTKKPQKN…NFRRTPSPVT (61 aa)), are a transit peptide targeting the chloroplast. The Helicase ATP-binding domain occupies 607 to 781 (LQKLKEKDVL…FGQCPIITAQ (175 aa)). 620–627 (GETGSGKT) lines the ATP pocket. The DEIH box signature appears at 722-725 (DEVH). Positions 868-1043 (LLEELICHID…ELCLHIKLLG (176 aa)) constitute a Helicase C-terminal domain.

It belongs to the DExH box helicase family.

The protein localises to the plastid. The protein resides in the chloroplast. It carries out the reaction ATP + H2O = ADP + phosphate + H(+). The sequence is that of DExH-box ATP-dependent RNA helicase DExH4, chloroplastic from Arabidopsis thaliana (Mouse-ear cress).